Reading from the N-terminus, the 878-residue chain is Probable LRR receptor-like serine/threonine-protein kinase MEE39 (878 aa).

Positions 1 to 25 (MKNLCWVFLSLFWFGVFLIIRFAEG) are cleaved as a signal peptide. The Extracellular portion of the chain corresponds to 26 to 514 (QNQEGFISLD…IDKPKKKVAV (489 aa)). Asn183, Asn203, Asn235, Asn290, Asn404, Asn418, Asn445, and Asn466 each carry an N-linked (GlcNAc...) asparagine glycan. LRR repeat units lie at residues 413–436 (RIIS…QNLA), 437–458 (HLES…FLAT), and 461–483 (SLLV…LRDR). Residues 515–535 (KVVAPVASIAAIVVVILLFVF) traverse the membrane as a helical segment. The Cytoplasmic portion of the chain corresponds to 536 to 878 (KKKMSSRNKP…FDTDVKPKAR (343 aa)). Position 557 is a phosphothreonine (Thr557). The Protein kinase domain maps to 566–840 (KNLQRPLGEG…QVIINLKECL (275 aa)). Residues 572–580 (LGEGGFGVV) and Lys594 each bind ATP. Tyr639 carries the phosphotyrosine modification. Asp691 acts as the Proton acceptor in catalysis. Residue Ser726 is modified to Phosphoserine. A phosphothreonine mark is found at Thr727 and Thr732. Position 740 is a phosphotyrosine (Tyr740). The segment covering 849–869 (RNNQNMDSGHSSDQLNVTVTF) has biased composition (polar residues). The segment at 849 to 878 (RNNQNMDSGHSSDQLNVTVTFDTDVKPKAR) is disordered.

It belongs to the protein kinase superfamily. Ser/Thr protein kinase family.

It localises to the membrane. It carries out the reaction L-seryl-[protein] + ATP = O-phospho-L-seryl-[protein] + ADP + H(+). The enzyme catalyses L-threonyl-[protein] + ATP = O-phospho-L-threonyl-[protein] + ADP + H(+). Its function is as follows. Receptor-like serine/threonine-kinase required during the endosperm development in seeds. This is Probable LRR receptor-like serine/threonine-protein kinase MEE39 (MEE39) from Arabidopsis thaliana (Mouse-ear cress).